The primary structure comprises 227 residues: ATP synthase F(0) complex subunit a (227 aa).

Helical transmembrane passes span 14–34 (FLGIPMILMALALPWLLIPTP), 73–93 (LASLMMFLLTLNMLGLMPYIF), 98–118 (QLSLNLGLAVPLWLATVLIGM), 137–157 (ALIPILIIMQTISLFIRPLAL), 179–199 (VFVLMPMMPVVAILTAVLLLL), and 203–223 (LEVAVAMIQAYVFILLLSLYL).

Belongs to the ATPase A chain family. In terms of assembly, component of the ATP synthase complex composed at least of ATP5F1A/subunit alpha, ATP5F1B/subunit beta, ATP5MC1/subunit c (homooctomer), MT-ATP6/subunit a, MT-ATP8/subunit 8, ATP5ME/subunit e, ATP5MF/subunit f, ATP5MG/subunit g, ATP5MK/subunit k, ATP5MJ/subunit j, ATP5F1C/subunit gamma, ATP5F1D/subunit delta, ATP5F1E/subunit epsilon, ATP5PF/subunit F6, ATP5PB/subunit b, ATP5PD/subunit d, ATP5PO/subunit OSCP. ATP synthase complex consists of a soluble F(1) head domain (subunits alpha(3) and beta(3)) - the catalytic core - and a membrane F(0) domain - the membrane proton channel (subunits c, a, 8, e, f, g, k and j). These two domains are linked by a central stalk (subunits gamma, delta, and epsilon) rotating inside the F1 region and a stationary peripheral stalk (subunits F6, b, d, and OSCP). Interacts with DNAJC30; interaction is direct.

Its subcellular location is the mitochondrion inner membrane. It carries out the reaction H(+)(in) = H(+)(out). Its function is as follows. Subunit a, of the mitochondrial membrane ATP synthase complex (F(1)F(0) ATP synthase or Complex V) that produces ATP from ADP in the presence of a proton gradient across the membrane which is generated by electron transport complexes of the respiratory chain. ATP synthase complex consist of a soluble F(1) head domain - the catalytic core - and a membrane F(1) domain - the membrane proton channel. These two domains are linked by a central stalk rotating inside the F(1) region and a stationary peripheral stalk. During catalysis, ATP synthesis in the catalytic domain of F(1) is coupled via a rotary mechanism of the central stalk subunits to proton translocation. With the subunit c (ATP5MC1), forms the proton-conducting channel in the F(0) domain, that contains two crucial half-channels (inlet and outlet) that facilitate proton movement from the mitochondrial intermembrane space (IMS) into the matrix. Protons are taken up via the inlet half-channel and released through the outlet half-channel, following a Grotthuss mechanism. The chain is ATP synthase F(0) complex subunit a from Gadus morhua (Atlantic cod).